We begin with the raw amino-acid sequence, 577 residues long: Guanine nucleotide-binding protein-like 3-like protein (577 aa).

A compositionally biased stretch (basic residues) spans 1 to 30; the sequence is MMKIRHKNKKPGKGSKGCKKPARQNGKKVT. Residues 1–75 are disordered; that stretch reads MMKIRHKNKK…VAREQERQRH (75 aa). The segment at 9 to 28 is required for nucleolar localization; sequence KKPGKGSKGCKKPARQNGKK. Residues 42 to 75 show a composition bias toward basic and acidic residues; the sequence is GNDHASREAELKKKRVEEMREKQQVAREQERQRH. Residues 43–103 adopt a coiled-coil conformation; it reads NDHASREAEL…QKEEVLQELN (61 aa). Residues 118–304 enclose the CP-type G domain; it reads YKEFRKVVEY…LLDAPGIVPG (187 aa). Residues 166-169, 253-260, and 297-300 contribute to the GTP site; these read NKID, GLPNVGKS, and DAPG.

It belongs to the TRAFAC class YlqF/YawG GTPase family. As to quaternary structure, interacts with MDM2; this interaction, which occurs in the nucleoplasm, stabilizes MDM2. Indirectly interacts with TP53, via MDM2-binding. Interacts with TERF1; this interaction probably occurs in the nucleoplasm and is increased during mitosis, when the nucleolus is disassembled. This binding may promote TERF1 homodimerization. Interacts with TERT.

The protein resides in the nucleus. The protein localises to the nucleolus. In terms of biological role, stabilizes TERF1 telomeric association by preventing TERF1 recruitment by PML. Stabilizes TERF1 protein by preventing its ubiquitination and hence proteasomal degradation. Does so by interfering with TERF1-binding to FBXO4 E3 ubiquitin-protein ligase. Required for cell proliferation. By stabilizing TRF1 protein during mitosis, promotes metaphase-to-anaphase transition. Stabilizes MDM2 protein by preventing its ubiquitination, and hence proteasomal degradation. By acting on MDM2, may affect TP53 activity. Required for normal processing of ribosomal pre-rRNA. Binds GTP. In Mus musculus (Mouse), this protein is Guanine nucleotide-binding protein-like 3-like protein (Gnl3l).